The sequence spans 325 residues: Aminotransferase tasG (325 aa).

Glycine 35 contributes to the substrate binding site. Pyridoxal 5'-phosphate contacts are provided by residues 89 to 90 (TW), asparagine 143, tyrosine 174, and 203 to 205 (SFA). Residue asparagine 143 coordinates substrate. Residue lysine 206 is modified to N6-(pyridoxal phosphate)lysine. Arginine 214 lines the pyridoxal 5'-phosphate pocket.

This sequence belongs to the class-I pyridoxal-phosphate-dependent aminotransferase family. Homodimer. Pyridoxal 5'-phosphate serves as cofactor.

Its pathway is secondary metabolite biosynthesis. Its function is as follows. Aminotransferase; part of the gene cluster that mediates the biosynthesis of the tetramic acids Sch210971 and Sch210972, potential anti-HIV fungal natural product that contain a decalin core. The PKS module of tasS together with the enoylreductase tasC catalyze the formation of the polyketide unit which is then conjugated to 4-hydroxyl-4-methyl glutamate (HMG) by the condensation domain of the tasS NRPS module. One unique structural feature of Sch210971 and Sch210972 is the tetramic acid motif proposed to be derived from the non-proteinogenic amino acid HMG, by a Dieckmann-type condensation catalyzed by the reductase domain of tasS. The aldolase tasA catalyzes the aldol condensation of 2 molecules of pyruvic acid to yield the intermediate 4-hydroxyl-4-methyl-2-oxoglutarate (HMOG), which can then be stereoselectively transaminated, may be by tasG, to form HMG. The Diels-Alderase tas3 then uses the Dieckmann product of tasS as substrate and catalyzes the Diels-Alder cycloaddition to form the decalin ring of Sch210971 and Sch210972. The protein is Aminotransferase tasG of Hapsidospora irregularis.